The primary structure comprises 355 residues: Chorismate synthase (355 aa).

R48 contacts NADP(+). FMN is bound by residues 126-128 (RSS), G278, 293-297 (KPIPS), and R319.

It belongs to the chorismate synthase family. As to quaternary structure, homotetramer. Requires FMNH2 as cofactor.

It catalyses the reaction 5-O-(1-carboxyvinyl)-3-phosphoshikimate = chorismate + phosphate. Its pathway is metabolic intermediate biosynthesis; chorismate biosynthesis; chorismate from D-erythrose 4-phosphate and phosphoenolpyruvate: step 7/7. In terms of biological role, catalyzes the anti-1,4-elimination of the C-3 phosphate and the C-6 proR hydrogen from 5-enolpyruvylshikimate-3-phosphate (EPSP) to yield chorismate, which is the branch point compound that serves as the starting substrate for the three terminal pathways of aromatic amino acid biosynthesis. This reaction introduces a second double bond into the aromatic ring system. This is Chorismate synthase from Oleidesulfovibrio alaskensis (strain ATCC BAA-1058 / DSM 17464 / G20) (Desulfovibrio alaskensis).